A 385-amino-acid polypeptide reads, in one-letter code: MRPSRRPRFRNILENRTIAAMTRSTIASFRAVSKHYGSHCALRDFNLELREGELLTLLGPSGCGKTTVLRLLAGLEIPDSGEIFLDGRTLAGVPPEARNVNTVFQSYALFPHLSVAENVAFGLRMKKLGSAEIRARTAEALRMVRLDGLGGHRPLQLSGGQQQRVALARALVNRPRVLLLDECLSALDYQLRREMQLELKGLQRQTGITFVFVTHDREEALSMSDRIAVMRTGRIEQLGPPRDIYERPANLFVAQFAGESNVLEATVTAITAPDSLIVELAGTPLTVRTDRRFRVGARLVLVLRPEDLHVHDDAAAEGGLAGHVLERTYRGVTLDTVIALDAGPRIKTSEFFREDTPALDHPPGQRVRVSWTPGWEIVLPHDPET.

In terms of domain architecture, ABC transporter spans 27–257 (ASFRAVSKHY…PANLFVAQFA (231 aa)). Position 59-66 (59-66 (GPSGCGKT)) interacts with ATP.

The protein belongs to the ABC transporter superfamily. Spermidine/putrescine importer (TC 3.A.1.11.1) family. As to quaternary structure, the complex is composed of two ATP-binding proteins (PotA), two transmembrane proteins (PotB and PotC) and a solute-binding protein (PotD).

It is found in the cell inner membrane. It carries out the reaction ATP + H2O + polyamine-[polyamine-binding protein]Side 1 = ADP + phosphate + polyamineSide 2 + [polyamine-binding protein]Side 1.. Part of the ABC transporter complex PotABCD involved in spermidine/putrescine import. Responsible for energy coupling to the transport system. The chain is Spermidine/putrescine import ATP-binding protein PotA from Methylococcus capsulatus (strain ATCC 33009 / NCIMB 11132 / Bath).